A 395-amino-acid polypeptide reads, in one-letter code: Neuromedin-U receptor 2 (395 aa).

The Extracellular portion of the chain corresponds to 1 to 41 (MGKLENASWIHDSLMKYLNSTEEYLAYLCGPKRSDLSLPVS). Asn-6 and Asn-19 each carry an N-linked (GlcNAc...) asparagine glycan. The helical transmembrane segment at 42-62 (VVYALIFVVGVIGNLLVCLVI) threads the bilayer. The Cytoplasmic segment spans residues 63–74 (ARHQTLKTPTNY). The helical transmembrane segment at 75–95 (YLFSLAVSDLLVLLLGMPLEV) threads the bilayer. At 96-115 (YELWHNYPFLFGPVGCYFKT) the chain is on the extracellular side. A disulfide bond links Cys-111 and Cys-196. Residues 116–138 (ALFETVCFASILSVTTVSIERYV) form a helical membrane-spanning segment. Residues 139-157 (AIVHPFRAKLESTRRRALR) lie on the Cytoplasmic side of the membrane. A helical membrane pass occupies residues 158-178 (ILSLVWSFSVVFSLPNTSIHG). At 179 to 212 (IKFQQFPNGSSVPGSATCTVTKPIWVYNFIIQAT) the chain is on the extracellular side. Asn-186 is a glycosylation site (N-linked (GlcNAc...) asparagine). A helical membrane pass occupies residues 213 to 233 (SFLFYILPMTLISVLYYLMGL). Topologically, residues 234-257 (RLKRDESLEADKVTVNIHRPSRKS) are cytoplasmic. The chain crosses the membrane as a helical span at residues 258–278 (VTKMLFVLVLVFAICWTPFHV). The Extracellular segment spans residues 279 to 293 (DRLFFSFVDEWTESL). The helical transmembrane segment at 294–314 (AAVFNLIHVVSGVFFYLSSAV) threads the bilayer. Over 315–395 (NPIIYNLLSR…TTVPCVEEVP (81 aa)) the chain is Cytoplasmic.

It belongs to the G-protein coupled receptor 1 family. In terms of tissue distribution, expressed primarily in brain tissues, more specifically in medulla and spinal cord. Widespread distribution in peripheral tissues.

It is found in the cell membrane. Receptor for the neuromedin-U and neuromedin-S neuropeptides. This is Neuromedin-U receptor 2 (Nmur2) from Mus musculus (Mouse).